We begin with the raw amino-acid sequence, 130 residues long: Glycine cleavage system H protein (130 aa).

Residues 25–107 (IATIGITEFA…YGEGWFLKVR (83 aa)) form the Lipoyl-binding domain. An N6-lipoyllysine modification is found at Lys-66.

Belongs to the GcvH family. The glycine cleavage system is composed of four proteins: P, T, L and H. It depends on (R)-lipoate as a cofactor.

In terms of biological role, the glycine cleavage system catalyzes the degradation of glycine. The H protein shuttles the methylamine group of glycine from the P protein to the T protein. In Nostoc sp. (strain PCC 7120 / SAG 25.82 / UTEX 2576), this protein is Glycine cleavage system H protein.